The sequence spans 317 residues: Testis-expressed protein 19.2 (317 aa).

The segment covering M64–E75 has biased composition (acidic residues). The disordered stretch occupies residues M64–Q113. The tract at residues Q101–L145 is important for interaction with piRNA.

Interacts with UBR2. Interacts with piRNA-associated proteins DDX4, EDC4, MAEL, PIWIL1, PIWIL2, RANBP9 and TDRD6. As to expression, specifically expressed in somatic cells of male gonad lineage.

The protein resides in the cytoplasm. May be required during spermatogenesis, probably by participating in the repression of retrotransposable elements and prevent their mobilization. With its paralog, Tex19.1, collaborates with the Piwi-interacting RNA (piRNA) pathway, which mediates the repression of transposable elements during meiosis by forming complexes composed of piRNAs and Piwi proteins. Interacts with Piwi proteins and directly binds piRNAs, a class of 24 to 30 nucleotide RNAs that are generated by a Dicer-independent mechanism and are primarily derived from transposons and other repeated sequence elements. This chain is Testis-expressed protein 19.2 (Tex19.2), found in Mus musculus (Mouse).